A 214-amino-acid chain; its full sequence is uncharacterized protein (214 aa).

A run of 4 helical transmembrane segments spans residues 43-63 (IQKP…AAHI), 84-104 (IEWA…IPVI), 116-136 (ALVI…EYFI), and 150-170 (PVTR…FGIF).

Its subcellular location is the host membrane. This is an uncharacterized protein from Citrus leprosis virus C (isolate Citrus sinesis/Brazil/Cordeiropolis/2003) (CiLV-C).